The primary structure comprises 293 residues: MSKLYGSIEAGGTKFVCAVGDENFQILEKVQFPTTTPYETIEKTVAFFKKFEADLASVAIGSFGPIDIDQNSDTYGYITSTPKPNWANVDFVGLISKDFKIPFYFTTDVNSSAYGETIARSNVKSLVYYTIGTGIGAGTIQNGEFIGGMGHTEAGHVYMAPHPNDVHHGFVGTCPFHKGCLEGLAAGPSLEARTGIRGELIEQNSEVWDIQAYYIAQAAIQATVLYRPQVIVFGGGVMAQEHMLNRVREKFTSLLNDYLPVPDVKDYIVTPAVAENGSATLGNLALAKKIAAR.

T133 contacts ATP. Zn(2+) contacts are provided by H156, C174, H177, and C180. Residues P188 and 236 to 240 (GVMAQ) contribute to the ATP site.

It belongs to the ROK (NagC/XylR) family. Requires Mg(2+) as cofactor.

It catalyses the reaction D-fructose + ATP = D-fructose 6-phosphate + ADP + H(+). Its activity is regulated as follows. Inhibition by zinc ions. In Streptococcus mutans serotype c (strain ATCC 700610 / UA159), this protein is Fructokinase (scrK).